We begin with the raw amino-acid sequence, 360 residues long: Inward rectifier potassium channel 13 (360 aa).

Residues 1 to 50 lie on the Cytoplasmic side of the membrane; it reads MDGSHCKVIAPLLTERHQRMVTKDGHSTLQMDGAQTGLAYLRDAWGILMD. A helical membrane pass occupies residues 51-77; that stretch reads MRWRWMMLVFSASFVIHWLVFAVLWYI. The Extracellular segment spans residues 78–105; sequence LAEMNGDLGLDHDAPPENHTICVKYITS. Positions 106 to 122 form an intramembrane region, helical; Pore-forming; the sequence is FTAAFSFSLETQLTIGY. A Selectivity filter motif is present at residues 119–124; the sequence is TIGYGT. Over 123-131 the chain is Extracellular; that stretch reads GTMFPSGDC. The helical transmembrane segment at 132-157 threads the bilayer; the sequence is PSAIALLAIQMLLGLMLEAFITGAFV. The Cytoplasmic segment spans residues 158 to 360; it reads AKIARPKNRA…FQISETGLTE (203 aa). Ser287 carries the post-translational modification Phosphoserine.

Belongs to the inward rectifier-type potassium channel (TC 1.A.2.1) family. As to quaternary structure, homotetramer. Interacts with RAB28; the interaction may facilitate cone outer segments phagocytosis. Post-translationally, phosphorylation at Ser-287 by PKA increases them.

The protein localises to the membrane. Its subcellular location is the cell membrane. It carries out the reaction K(+)(in) = K(+)(out). Its activity is regulated as follows. Inhibited by Ba(2+) and Cs(+), although sensitivity to those inhibitors is much lower than in other Kir channels. Its function is as follows. Inward rectifier potassium channels are characterized by a greater tendency to allow potassium to flow into the cell rather than out of it. Their voltage dependence is regulated by the concentration of extracellular potassium; as external potassium is raised, the voltage range of the channel opening shifts to more positive voltages. The inward rectification is mainly due to the blockage of outward current by internal magnesium. KCNJ13 has a very low single channel conductance, low sensitivity to block by external barium and cesium, and no dependence of its inward rectification properties on the internal blocking particle magnesium. The polypeptide is Inward rectifier potassium channel 13 (KCNJ13) (Bos taurus (Bovine)).